Consider the following 138-residue polypeptide: Large ribosomal subunit protein bL17 (138 aa).

The protein belongs to the bacterial ribosomal protein bL17 family. Part of the 50S ribosomal subunit. Contacts protein L32.

The chain is Large ribosomal subunit protein bL17 from Jannaschia sp. (strain CCS1).